Here is a 1105-residue protein sequence, read N- to C-terminus: Pheromone-regulated membrane protein 10 (1105 aa).

Residues 1–11 (MSDNRPTYDTS) show a composition bias toward polar residues. Disordered stretches follow at residues 1 to 22 (MSDN…NHFH), 36 to 55 (RKQN…TASN), 65 to 123 (GSNH…FYGD), 151 to 278 (IKPK…GGGL), 385 to 473 (AGAS…FLRG), and 520 to 656 (EQKS…LRHK). Positions 67–82 (NHKFGNSINNNNNNAN) are enriched in low complexity. Residues 85–106 (LGSSSAGTNRRSLISPTSSTHV) show a composition bias toward polar residues. The span at 162 to 178 (DSSDDDGNNLDEVEDET) shows a compositional bias: acidic residues. Positions 185–197 (LNQNHPPQQYYET) are enriched in polar residues. Residues 198 to 210 (DSSDEDEEDDDEV) show a composition bias toward acidic residues. Residues 390–413 (LDHSQQSSAAPSTEITPSQSPNQH) show a composition bias toward polar residues. Low complexity predominate over residues 417–439 (EKSNNNENNQQSTTVESSSSTSS). Basic and acidic residues predominate over residues 446-459 (LARRRASEERKKAE). 3 stretches are compositionally biased toward polar residues: residues 520–539 (EQKS…GTAL), 592–606 (RTNT…NSEE), and 624–633 (MNANLPSFQN). The next 10 membrane-spanning stretches (helical) occupy residues 782-802 (PPWL…PFAF), 809-829 (LPIS…VSSI), 835-855 (SVFE…IGSI), 860-880 (LFCF…GYII), 903-923 (VIYS…YGWI), 938-958 (AIDE…LGLI), 963-983 (WSQV…SFFA), 986-1006 (HFST…GVLG), 1015-1035 (GMAV…GIAS), and 1075-1095 (VEVS…IYPF).

Belongs to the ThrE exporter (TC 2.A.79) family.

It localises to the membrane. The polypeptide is Pheromone-regulated membrane protein 10 (PRM10) (Candida albicans (strain SC5314 / ATCC MYA-2876) (Yeast)).